A 63-amino-acid chain; its full sequence is Bowman-birk type proteinase inhibitor (63 aa).

7 disulfides stabilise this stretch: Cys-7/Cys-61, Cys-8/Cys-23, Cys-11/Cys-57, Cys-13/Cys-21, Cys-31/Cys-38, Cys-35/Cys-50, and Cys-40/Cys-48.

Inhibits trypsin, chymotrypsin, plasmin and factor XIIa. Does not inhibit factor Xa, thrombin and plasma kallikrein. This chain is Bowman-birk type proteinase inhibitor, found in Amburana acreana (Cerejeira).